Reading from the N-terminus, the 66-residue chain is Large ribosomal subunit protein bL35 (66 aa).

Positions 20-41 are disordered; the sequence is GKVMSAQRGKRHGMIKRTKKQI. A compositionally biased stretch (basic residues) spans 27–41; it reads RGKRHGMIKRTKKQI.

This sequence belongs to the bacterial ribosomal protein bL35 family.

The chain is Large ribosomal subunit protein bL35 from Rhodopseudomonas palustris (strain BisB5).